A 125-amino-acid chain; its full sequence is Mesotocin-neurophysin MT (125 aa).

An N-terminal signal peptide occupies residues 1 to 19 (MSYTALAVTFFGWLALSSA). Residues C20 and C25 are joined by a disulfide bond. G28 carries the glycine amide modification. 7 disulfide bridges follow: C42-C86, C45-C59, C53-C76, C60-C66, C93-C106, C100-C118, and C107-C112.

This sequence belongs to the vasopressin/oxytocin family. In terms of tissue distribution, mesotocin is produced by magnocellular preoptic neurons in the hypothalamus in amphibians, reptiles and birds.

Its subcellular location is the secreted. Its function is as follows. Mesotocin is a diuretic hormone. This chain is Mesotocin-neurophysin MT, found in Bufo japonicus (Japanese common toad).